Here is a 412-residue protein sequence, read N- to C-terminus: L-cysteine:1D-myo-inositol 2-amino-2-deoxy-alpha-D-glucopyranoside ligase (412 aa).

Positions 1 to 30 (MQTWSSPSVPKLRGAPRPLRLHDTATGEVR) are disordered. A Zn(2+)-binding site is contributed by Cys43. L-cysteinyl-5'-AMP-binding positions include 43–46 (CGIT), Thr58, and 81–83 (NVT). Residues 45–55 (ITPYDATHLGH) carry the 'HIGH' region motif. The short motif at 187–192 (ERGGDP) is the 'ERGGDP' region element. Trp227 contacts L-cysteinyl-5'-AMP. Position 231 (Cys231) interacts with Zn(2+). 249–251 (GSD) contributes to the L-cysteinyl-5'-AMP binding site. A Zn(2+)-binding site is contributed by His256. L-cysteinyl-5'-AMP is bound at residue Ile283. Residues 289-293 (KMSKS) carry the 'KMSKS' region motif.

Belongs to the class-I aminoacyl-tRNA synthetase family. MshC subfamily. Monomer. Zn(2+) is required as a cofactor.

The enzyme catalyses 1D-myo-inositol 2-amino-2-deoxy-alpha-D-glucopyranoside + L-cysteine + ATP = 1D-myo-inositol 2-(L-cysteinylamino)-2-deoxy-alpha-D-glucopyranoside + AMP + diphosphate + H(+). In terms of biological role, catalyzes the ATP-dependent condensation of GlcN-Ins and L-cysteine to form L-Cys-GlcN-Ins. The chain is L-cysteine:1D-myo-inositol 2-amino-2-deoxy-alpha-D-glucopyranoside ligase from Actinosynnema mirum (strain ATCC 29888 / DSM 43827 / JCM 3225 / NBRC 14064 / NCIMB 13271 / NRRL B-12336 / IMRU 3971 / 101).